A 58-amino-acid chain; its full sequence is Large ribosomal subunit protein uL24 (58 aa).

It belongs to the universal ribosomal protein uL24 family. As to quaternary structure, part of the 50S ribosomal subunit.

In terms of biological role, one of two assembly initiator proteins, it binds directly to the 5'-end of the 23S rRNA, where it nucleates assembly of the 50S subunit. Its function is as follows. One of the proteins that surrounds the polypeptide exit tunnel on the outside of the subunit. In Spiroplasma citri, this protein is Large ribosomal subunit protein uL24 (rplX).